The sequence spans 344 residues: Holliday junction branch migration complex subunit RuvB (344 aa).

A large ATPase domain (RuvB-L) region spans residues 1–183; sequence MLDERLISSH…FGISCRLDFY (183 aa). ATP contacts are provided by residues Ile-22, Arg-23, Gly-64, Lys-67, Thr-68, Thr-69, 130 to 132, Arg-173, Tyr-183, and Arg-220; that span reads EDY. Position 68 (Thr-68) interacts with Mg(2+). Residues 184 to 254 form a small ATPAse domain (RuvB-S) region; sequence TPLELSEIIL…LAKWALEMLE (71 aa). Residues 257–344 are head domain (RuvB-H); it reads ECGLDVMDRM…LEGKGLFSDA (88 aa). DNA-binding residues include Lys-312 and Arg-317.

The protein belongs to the RuvB family. In terms of assembly, homohexamer. Forms an RuvA(8)-RuvB(12)-Holliday junction (HJ) complex. HJ DNA is sandwiched between 2 RuvA tetramers; dsDNA enters through RuvA and exits via RuvB. An RuvB hexamer assembles on each DNA strand where it exits the tetramer. Each RuvB hexamer is contacted by two RuvA subunits (via domain III) on 2 adjacent RuvB subunits; this complex drives branch migration. In the full resolvosome a probable DNA-RuvA(4)-RuvB(12)-RuvC(2) complex forms which resolves the HJ.

It localises to the cytoplasm. The catalysed reaction is ATP + H2O = ADP + phosphate + H(+). The RuvA-RuvB-RuvC complex processes Holliday junction (HJ) DNA during genetic recombination and DNA repair, while the RuvA-RuvB complex plays an important role in the rescue of blocked DNA replication forks via replication fork reversal (RFR). RuvA specifically binds to HJ cruciform DNA, conferring on it an open structure. The RuvB hexamer acts as an ATP-dependent pump, pulling dsDNA into and through the RuvAB complex. RuvB forms 2 homohexamers on either side of HJ DNA bound by 1 or 2 RuvA tetramers; 4 subunits per hexamer contact DNA at a time. Coordinated motions by a converter formed by DNA-disengaged RuvB subunits stimulates ATP hydrolysis and nucleotide exchange. Immobilization of the converter enables RuvB to convert the ATP-contained energy into a lever motion, pulling 2 nucleotides of DNA out of the RuvA tetramer per ATP hydrolyzed, thus driving DNA branch migration. The RuvB motors rotate together with the DNA substrate, which together with the progressing nucleotide cycle form the mechanistic basis for DNA recombination by continuous HJ branch migration. Branch migration allows RuvC to scan DNA until it finds its consensus sequence, where it cleaves and resolves cruciform DNA. In Syntrophomonas wolfei subsp. wolfei (strain DSM 2245B / Goettingen), this protein is Holliday junction branch migration complex subunit RuvB.